A 330-amino-acid chain; its full sequence is uncharacterized protein (330 aa).

This sequence belongs to the ornithine cyclodeaminase/mu-crystallin family.

The protein resides in the cytoplasm. This is an uncharacterized protein from Schizosaccharomyces pombe (strain 972 / ATCC 24843) (Fission yeast).